The sequence spans 424 residues: UPF0229 protein Ping_2705 (424 aa).

Positions 77–108 (PGNQDFIGGDRIERPPSGGAGGSGSGASDSGK) are disordered.

It belongs to the UPF0229 family.

This Psychromonas ingrahamii (strain DSM 17664 / CCUG 51855 / 37) protein is UPF0229 protein Ping_2705.